We begin with the raw amino-acid sequence, 657 residues long: Glycogen debranching enzyme (657 aa).

The active-site Nucleophile is aspartate 336. Catalysis depends on glutamate 371, which acts as the Proton donor. Over residues 458-467 (NEANGEENRD) the composition is skewed to basic and acidic residues. The interval 458–479 (NEANGEENRDGTNNNYSNNHGK) is disordered.

It belongs to the glycosyl hydrolase 13 family.

The enzyme catalyses Hydrolysis of (1-&gt;6)-alpha-D-glucosidic linkages to branches with degrees of polymerization of three or four glucose residues in limit dextrin.. It functions in the pathway glycan degradation; glycogen degradation. In terms of biological role, removes maltotriose and maltotetraose chains that are attached by 1,6-alpha-linkage to the limit dextrin main chain, generating a debranched limit dextrin. The protein is Glycogen debranching enzyme of Escherichia coli (strain 55989 / EAEC).